A 227-amino-acid chain; its full sequence is Small heat shock protein hspG3 (227 aa).

The sHSP domain maps to 31-227 (NKRVDIIPSM…SSNTIKININ (197 aa)). The tract at residues 119–164 (QQQQLENSNKENDEPSIEEFEEDVKSKSELNKTTLNTTENKDEDKT) is disordered.

Belongs to the small heat shock protein (HSP20) family.

This Dictyostelium discoideum (Social amoeba) protein is Small heat shock protein hspG3 (hspG3).